Reading from the N-terminus, the 38-residue chain is Potassium channel toxin alpha-KTx 3.7 (38 aa).

3 cysteine pairs are disulfide-bonded: cysteine 8–cysteine 28, cysteine 14–cysteine 33, and cysteine 18–cysteine 35.

The protein belongs to the short scorpion toxin superfamily. Potassium channel inhibitor family. Alpha-KTx 03 subfamily. Expressed by the venom gland.

The protein localises to the secreted. Blocks voltage-gated potassium channels Kv1.1/KCNA1 (IC(50)=0.6 nM), Kv1.2/KCNA2 (IC(50)=5.4 nM), Kv1.3/KCNA3 (IC(50)=0.014 nM) potently, and moderately block intermediate conductance calcium-activated potassium channels KCa3.1/KCNN4 (IC(50)=225 nM). Also shows activity on muscle-type nicotinic acetylcholine receptor (nAChR), since it reversibly and dose-dependently inhibits acetylcholine-induced current through mouse muscle-type nAChR heterologously expressed in Xenopus oocytes (IC(50)=1.6 uM). This Orthochirus scrobiculosus (Central Asian scorpion) protein is Potassium channel toxin alpha-KTx 3.7.